The following is a 273-amino-acid chain: Dermonecrotic toxin LdSicTox-alphaIB1av (273 aa).

Residue His5 is part of the active site. Residues Glu25 and Asp27 each coordinate Mg(2+). His41 functions as the Nucleophile in the catalytic mechanism. Disulfide bonds link Cys45-Cys51 and Cys47-Cys190. Asp85 is a binding site for Mg(2+). Residue Asn250 is glycosylated (N-linked (GlcNAc...) asparagine).

It belongs to the arthropod phospholipase D family. Class II subfamily. Mg(2+) is required as a cofactor. As to expression, expressed by the venom gland.

It localises to the secreted. The enzyme catalyses an N-(acyl)-sphingosylphosphocholine = an N-(acyl)-sphingosyl-1,3-cyclic phosphate + choline. It carries out the reaction an N-(acyl)-sphingosylphosphoethanolamine = an N-(acyl)-sphingosyl-1,3-cyclic phosphate + ethanolamine. The catalysed reaction is a 1-acyl-sn-glycero-3-phosphocholine = a 1-acyl-sn-glycero-2,3-cyclic phosphate + choline. It catalyses the reaction a 1-acyl-sn-glycero-3-phosphoethanolamine = a 1-acyl-sn-glycero-2,3-cyclic phosphate + ethanolamine. In terms of biological role, dermonecrotic toxins cleave the phosphodiester linkage between the phosphate and headgroup of certain phospholipids (sphingolipid and lysolipid substrates), forming an alcohol (often choline) and a cyclic phosphate. This toxin acts on sphingomyelin (SM). It may also act on ceramide phosphoethanolamine (CPE), lysophosphatidylcholine (LPC) and lysophosphatidylethanolamine (LPE), but not on lysophosphatidylserine (LPS), and lysophosphatidylglycerol (LPG). It acts by transphosphatidylation, releasing exclusively cyclic phosphate products as second products. Induces dermonecrosis, hemolysis, increased vascular permeability, edema, inflammatory response, and platelet aggregation. The chain is Dermonecrotic toxin LdSicTox-alphaIB1av from Loxosceles deserta (Desert recluse spider).